Consider the following 413-residue polypeptide: Glutaminase (413 aa).

The tract at residues 23–307 (GELADYIPEL…LSDDMGLHLM (285 aa)) is glutaminase. 7 residues coordinate substrate: Ser-65, Asn-114, Glu-160, Asn-167, Tyr-191, Tyr-243, and Val-261. The STAS domain maps to 316-413 (AVRSITRDGD…SDGTICKERV (98 aa)).

Belongs to the glutaminase family. Homotetramer.

The enzyme catalyses L-glutamine + H2O = L-glutamate + NH4(+). The polypeptide is Glutaminase (glsA) (Corynebacterium glutamicum (strain ATCC 13032 / DSM 20300 / JCM 1318 / BCRC 11384 / CCUG 27702 / LMG 3730 / NBRC 12168 / NCIMB 10025 / NRRL B-2784 / 534)).